The chain runs to 309 residues: Transcription elongation factor S-II (309 aa).

A TFIIS N-terminal domain is found at 5–79; that stretch reads EVLVHVKNLE…SSWKDAINKN (75 aa). Residues 78–142 form a disordered region; that stretch reads KNKRSRQAQQ…NSKNDGVDTA (65 aa). Positions 88 to 102 are enriched in basic and acidic residues; that stretch reads HHQDHAPGNAEDKTT. The span at 103-120 shows a compositional bias: polar residues; sequence VGESVNGVQQPASSQSDA. S116 bears the Phosphoserine mark. The TFIIS central domain occupies 148-264; sequence LRDQVLKALY…NAQGATIERS (117 aa). The segment at 267-307 adopts a TFIIS-type zinc-finger fold; sequence DRFTCGKCKEKKVSYYQLQTRSADEPLTTFCTCEACGNRWK. Zn(2+) is bound by residues C271, C274, C299, and C302.

Belongs to the TFS-II family.

It is found in the nucleus. Its function is as follows. Necessary for efficient RNA polymerase II transcription elongation past template-encoded arresting sites. The arresting sites in DNA have the property of trapping a certain fraction of elongating RNA polymerases that pass through, resulting in locked ternary complexes. Cleavage of the nascent transcript by S-II allows the resumption of elongation from the new 3'-terminus. Functionally, can promote the transfer of one strand of a double-stranded DNA molecule to a homologous single strand and thus may be involved in recombination. The sequence is that of Transcription elongation factor S-II (DST1) from Saccharomyces cerevisiae (strain ATCC 204508 / S288c) (Baker's yeast).